We begin with the raw amino-acid sequence, 204 residues long: Large ribosomal subunit protein uL3 (204 aa).

The protein belongs to the universal ribosomal protein uL3 family. As to quaternary structure, part of the 50S ribosomal subunit. Forms a cluster with proteins L14 and L19.

One of the primary rRNA binding proteins, it binds directly near the 3'-end of the 23S rRNA, where it nucleates assembly of the 50S subunit. In Azobacteroides pseudotrichonymphae genomovar. CFP2, this protein is Large ribosomal subunit protein uL3.